We begin with the raw amino-acid sequence, 83 residues long: Small ribosomal subunit protein eS21 (83 aa).

The protein belongs to the eukaryotic ribosomal protein eS21 family. In terms of assembly, component of the 40S small ribosomal subunit. Interacts with sta.

It is found in the cytoplasm. It localises to the cytosol. The protein localises to the rough endoplasmic reticulum. In terms of biological role, may be an associated component of the ribosome rather than a core structural subunit. May act as a translation initiation factor. Has a role in regulation of cell proliferation in the hematopoietic organs and the imaginal disks of larva. This chain is Small ribosomal subunit protein eS21 (RpS21), found in Drosophila simulans (Fruit fly).